The following is a 2017-amino-acid chain: MDEPPSKKSRADSDYDSGLDALSALESLEAFPTSSKDTDVDNNPSTSAGGSGGPSGSTPHPQGTPQPAPSNNGGFNLQPGQSQPQQPPQNMGGGVNGSVLQELLMNPSQTSNNSPRPQAYPPGQQNAFNRSPMMPNGTPNMMSPPSMGRVPGPSPGGPQPPGPGQPQMRPGQPGMFQGDQQQQMMMGAQGQQFPGMMHRYPYAQGGPPPGAQGMPQGYPGVSRGGPTPGQPMGRGAMMNGAMPRSGPMPTQGRPGIPPNQQAMMQPMMTDRQFMQHGQYGQQRPEFMQQYGRPGGYPMMHQGMMMDSNGQPIRGPNQMMMMSNGHPGMSHGPPNGQPGPQAAAAQHAAQQQAAAQAQAQAAAQQQQQQQREQEAAAAAQRNGAGRATTPGSSMLATHQDPEKRKLIQQQLVLLLHAHKCSQREKENRDFAAKNQPPPHAACTLPHCSTMKEVLTHMTSCNVGRLCHSDTTQTTKKCSVAHCASSRQIIAHWKNCSREDCPVCKPLKRIQDTPLQFSLPDLANLIGVNGNSNGSAEGDGLHQFGSPAMRTGNITNSLFEGFNGNPFQNGPNRGGPRPPGGNGEIPNLPPPDMPDCTKEWHHQVTKDLRNHLVGKLVKAIFPEPNQEAMNDNRLKDLIAYARKVEKEMFESANDREEYYHLLAEKIYKIQKELQEKKNSRLNQGAAAHDQYAIPPSNELAQMLGVEGGRSDVHSEGSSMAVAPSQQNQPWGGAPNSNMHQQIPPNGQVPQVNNSSTFPSSGNSTPNIGASSTVSAMLQPKTEPMDDQNTDSLSSRPPTAIGFGGSSSSTPAPIMNGIVKKEEDPEESSNQAPPSVKDTKDGVAESKPKEQQAKREPTPPPTEDTVFSQEDLIKFLLPVWEKLDKSEDAAPFRVPVDAKLLNIPDYHEIIKRPMDLETVHKKLYAGQYQNAGQFCDDIWLMLDNAWLYNRKNSKVYKYGLKLSEMFVSEMDPVMKSMGYCCAKKLAFTPLSLFCYGAAMCTIAREQQYWVFEQSSTQYNVTVTERYTYCQKCFDALPPEGISLSENPNDRNNMAPKTSFTEQKNSVIDYEPFERCKYCMRKWHRICALHDKKVYPEGFICECCRTAKKYQKPDNKYLASKLPHNKLSTFLEDRVNGFIKKQLQAEAHKYPVIIRTLCVQDKEAEVKAQMKQKYVESNQFPEKFPYRTKAVFAFEIIDGVEVCFFGLHVQEYGSACPAPNARRVYIAYLDSVHFFQPRELRTDVYHELLLGYLDYAKMLGYTMAHIWACPPSEGDDYIFHCHPPEQKIPKPKRLQDWYKKMLEKGVQEGSVVEFKDIYKQARDDNLTTPTQLPYFEGDFWPNVIEDCIREASNEEAQRKVKEDDDDGEDADGGLGGGDSGKKKSSKNKKNNLKKNAKMNKKKAGSITGNEVADKLYSQFEKHKEVFFTIRLVSLQNEPAVLAKPISDPDGLMQSDMMDGRDTFLTKAREEHWEFSSLRRAKYSTLCLAYSLHETDSKGMEYTCNKCSSPAVWHCQSCDDFDLCDGCKPTTQHPHEMEKIKSLIGGGEAGDSAAGGTRYESIQRCIASLVHACQCRDANCRRMSCHKMKRVVQHTKMCKKRINGTCPVCKQLIALCCYHAKHCTRDACTVPFCMNIRQKLAEQKRSQQRRADMMMRRRMEGLQSHVGGAAPTPSTVSNGTPSNAPTPPVSAGPGPAVKGGGVGQVQMQQHQGSHVGGSGPAGMGQPMNSFGGMPGMGLGPNAQNGPGLPGMNPQMNANQSRYMPNGPGLGQSGAPGQQQQPMYSSGMPMQRPGGLGGMNPQQQPQQQQGHPGLQNPGGRPGGVHGMGQNQPVRNNQDMVMNMQMQNQHQQPPPFDSTLQPQIMKINSRLKAAKTEEERETVFSDLKKTPHLFHAWLRMRENQNLVPNRMQGYSQMSMGSSNLQNLQQQQLQQQQAGAMRGGGGFAPGQNNSQPRAPSGQFASMNPSMQQQYPQQQQGWPQQRQQNPGGMQQNANPYNQFQNRQNMMMMPQQQQPHPSNAGGQ.

Over residues Met-1–Ser-13 the composition is skewed to basic and acidic residues. Residues Met-1–Gln-182 form a disordered region. Composition is skewed to low complexity over residues Ala-21–Ala-30 and Gln-78–Asn-90. The segment covering Asn-106–Arg-116 has biased composition (polar residues). Residues Met-141–Pro-151 show a composition bias toward low complexity. The span at Gly-152–Gly-164 shows a compositional bias: pro residues. Positions Gln-165–Gln-182 are enriched in low complexity. Arg-234 carries the post-translational modification Symmetric dimethylarginine; by PRMT5; in vitro. Residues Ser-307 to Gln-398 are disordered. Low complexity predominate over residues Gln-340–Gln-379. The TAZ-type 1 zinc-finger motif lies at Asp-399–Leu-505. Disordered regions lie at residues Glu-558–Asp-593 and Gly-706–Phe-864. A compositionally biased stretch (low complexity) spans Gly-559–Gly-573. The region spanning Asp-593–Gln-672 is the KIX domain. Over residues Pro-721 to Ala-773 the composition is skewed to polar residues. Over residues Lys-834–Pro-854 the composition is skewed to basic and acidic residues. The Bromo domain maps to Phe-864–Val-970. 2 interaction with histone regions span residues Asp-902–Lys-948 and Tyr-1224–Asp-1226. The CBP/p300-type HAT domain maps to Lys-1112 to Ser-1492. Residues Leu-1225–Ser-1227, Arg-1237–Thr-1238, Ile-1284, Arg-1289, and Trp-1293 each bind acetyl-CoA. The span at Asn-1349–Glu-1358 shows a compositional bias: basic and acidic residues. The disordered stretch occupies residues Asn-1349–Ser-1401. The span at Lys-1378–Ala-1399 shows a compositional bias: basic residues. The ZZ-type zinc finger occupies Gly-1494–Gly-1540. Zn(2+)-binding residues include Cys-1499, Cys-1502, Cys-1510, Cys-1513, Cys-1519, Cys-1522, His-1528, and His-1530. The segment at Gly-1550–Ile-1631 adopts a TAZ-type 2 zinc-finger fold. 2 disordered regions span residues Gly-1656 to Arg-1828 and Ser-1908 to Gln-2017. Residues Thr-1667–Asn-1678 show a composition bias toward polar residues. The span at Gln-1699 to Ser-1708 shows a compositional bias: low complexity. Polar residues predominate over residues Pro-1748–Tyr-1757. Low complexity-rich tracts occupy residues Met-1793 to Gly-1812 and Ser-1908 to Ala-1932. Positions Gln-1943 to Met-1962 are enriched in polar residues. A compositionally biased stretch (low complexity) spans Gln-1963–Gln-2017.

As to quaternary structure, interacts (via N-terminus domain and HAT domain) with prmt-5; the interaction results in methylation of cbp-1. Interacts (via HAT domain) with cep-1; cep-1 transcriptional activity may be inhibited by interaction with methylated cbp-1. Component of a complex that contains prmt-5 and cbp-1. Post-translationally, methylation by prmt-5 may repress the capacity of cbp-1 to enhance cep-1-dependent transcription of egl-1.

The protein resides in the nucleus. The enzyme catalyses L-lysyl-[protein] + acetyl-CoA = N(6)-acetyl-L-lysyl-[protein] + CoA + H(+). Its function is as follows. Acetyltransferase enzyme. Acetylates histones, giving a specific tag for transcriptional activation. May prevent DNA damage-induced apoptosis by inhibiting cep-1-dependent transcription activation of the programmed cell death activator egl-1. In differentiated cells, negatively regulates localization of heterochromatin to the nuclear periphery. Plays a role in migration of gonadal distal tip cells, where it probably modulates expression of genes involved in integrin-mediated adhesion. This chain is Protein cbp-1 (cbp-1), found in Caenorhabditis elegans.